Reading from the N-terminus, the 221-residue chain is MVRRSLYFLAVMGVVRSSSGLYIPSVVLQELGIASSQGCLMIAETNNGNFGIVSSGLENPVYITESPQGHREVSWQPVRGEDRAVPIYAPSAEEVRESISSVRGSEPGQYIAPQPTGFVPASTPVFGTIESASTAGAAVPVEGVFVASTENPASTGSSSTSTCPPKGTAGTTDNKGKAGGAAADDKSKSSSSSSSKKKKKGAKSLVALGAVATTALFSIVM.

The N-terminal stretch at 1 to 20 (MVRRSLYFLAVMGVVRSSSG) is a signal peptide. The disordered stretch occupies residues 150–203 (ENPASTGSSSTSTCPPKGTAGTTDNKGKAGGAAADDKSKSSSSSSSKKKKKGAK). The segment covering 154 to 173 (STGSSSTSTCPPKGTAGTTD) has biased composition (low complexity). Serine 192 carries GPI-anchor amidated serine lipidation. A propeptide spans 193–221 (SSSKKKKKGAKSLVALGAVATTALFSIVM) (removed in mature form).

The protein resides in the spore wall. The protein localises to the membrane. It localises to the cytoplasm. Spore wall component. This is Spore wall protein 3 (SWP3) from Encephalitozoon cuniculi (strain GB-M1) (Microsporidian parasite).